Reading from the N-terminus, the 225-residue chain is Uracil-DNA glycosylase (225 aa).

The active-site Proton acceptor is D67.

This sequence belongs to the uracil-DNA glycosylase (UDG) superfamily. UNG family.

It localises to the cytoplasm. The catalysed reaction is Hydrolyzes single-stranded DNA or mismatched double-stranded DNA and polynucleotides, releasing free uracil.. Functionally, excises uracil residues from the DNA which can arise as a result of misincorporation of dUMP residues by DNA polymerase or due to deamination of cytosine. The chain is Uracil-DNA glycosylase from Coxiella burnetii (strain Dugway 5J108-111).